The following is a 221-amino-acid chain: Interleukin-12 subunit alpha (221 aa).

A signal peptide spans 1 to 25; the sequence is MCPLRSLLLISTLVLLHHLPHLSLG. 3 cysteine pairs are disulfide-bonded: cysteine 39–cysteine 112, cysteine 66–cysteine 198, and cysteine 87–cysteine 125. An N-linked (GlcNAc...) asparagine glycan is attached at asparagine 95.

Belongs to the IL-6 superfamily. As to quaternary structure, heterodimer with IL12B; disulfide-linked. This heterodimer is known as interleukin IL-12. Heterodimer with EBI3/IL27B; not disulfide-linked. This heterodimer is known as interleukin IL-35. Interacts with NBR1; this interaction promotes IL-12 secretion.

The protein localises to the secreted. Functionally, heterodimerizes with IL12B to form the IL-12 cytokine or with EBI3/IL27B to form the IL-35 cytokine. IL-12 is primarily produced by professional antigen-presenting cells (APCs) such as B-cells and dendritic cells (DCs) as well as macrophages and granulocytes and regulates T-cell and natural killer-cell responses, induces the production of interferon-gamma (IFN-gamma), favors the differentiation of T-helper 1 (Th1) cells and is an important link between innate resistance and adaptive immunity. Mechanistically, exerts its biological effects through a receptor composed of IL12R1 and IL12R2 subunits. Binding to the receptor results in the rapid tyrosine phosphorylation of a number of cellular substrates including the JAK family kinases TYK2 and JAK2. In turn, recruited STAT4 gets phosphorylated and translocates to the nucleus where it regulates cytokine/growth factor responsive genes. As part of IL-35, plays essential roles in maintaining the immune homeostasis of the liver microenvironment and also functions as an immune-suppressive cytokine. Mediates biological events through unconventional receptors composed of IL12RB2 and gp130/IL6ST heterodimers or homodimers. Signaling requires the transcription factors STAT1 and STAT4, which form a unique heterodimer that binds to distinct DNA sites. This Bos taurus (Bovine) protein is Interleukin-12 subunit alpha (IL12A).